A 442-amino-acid chain; its full sequence is FBD-associated F-box protein At1g66310 (442 aa).

The 47-residue stretch at valine 18–aspartate 64 folds into the F-box domain. Residues lysine 363–leucine 415 form the FBD domain.

The protein is FBD-associated F-box protein At1g66310 of Arabidopsis thaliana (Mouse-ear cress).